A 284-amino-acid chain; its full sequence is MPDYTWFEGIPFPAFGIPKETLQNVCNKFVVKEEDLILLTYPKSGTNWLIEIVCLIQTKGDPKWIQSVTIWDRSPWIETDLGYDMLIKKKGPRLITSHLPMHLFSKSLFSSKAKVIYLIRNPRDVLVSGYYFWGKTTLAKKPDSLGTYVEWFLKGYVPYGSWFEHIRAWLSMRELDNFLLLYYEDMKKDTMGTIKKICDFLGKKLEPDELDLVLKYSSFQVMKENNMSNYNLMEKELILPGFTFMRNGTTGDWKNHFTVAQAEAFDKVFQEKMAGFPPGMFPWD.

43–48 (KSGTNW) lines the 3'-phosphoadenylyl sulfate pocket. The active-site Proton acceptor is the His-98. Residues Arg-120, Ser-128, Tyr-183, 217-222 (SSFQVM), and 246-248 (RNG) each bind 3'-phosphoadenylyl sulfate.

This sequence belongs to the sulfotransferase 1 family. As to quaternary structure, oligomer. In terms of tissue distribution, liver, exhibiting a sex-dependent spatial localization in the lobule of the liver.

The protein resides in the cytoplasm. Its subcellular location is the cytosol. It catalyses the reaction an alcohol + 3'-phosphoadenylyl sulfate = an alkyl sulfate + adenosine 3',5'-bisphosphate + H(+). It carries out the reaction glycolithocholate + 3'-phosphoadenylyl sulfate = sulfoglycolithocholate + adenosine 3',5'-bisphosphate + H(+). The enzyme catalyses taurolithocholate + 3'-phosphoadenylyl sulfate = taurolithocholate 3-sulfate + adenosine 3',5'-bisphosphate + H(+). The catalysed reaction is 3beta-hydroxyandrost-5-en-17-one + 3'-phosphoadenylyl sulfate = dehydroepiandrosterone 3-sulfate + adenosine 3',5'-bisphosphate + H(+). It catalyses the reaction 3beta-hydroxy-5-cholenate + 3'-phosphoadenylyl sulfate = 3beta-sulfo-5-cholenate + adenosine 3',5'-bisphosphate + H(+). It carries out the reaction deoxycholate + 3'-phosphoadenylyl sulfate = 3alpha-sulfodeoxycholate + adenosine 3',5'-bisphosphate + H(+). The enzyme catalyses glycodeoxycholate + 3'-phosphoadenylyl sulfate = 3alpha-sulfoglycodeoxycholate + adenosine 3',5'-bisphosphate + H(+). The catalysed reaction is taurodeoxycholate + 3'-phosphoadenylyl sulfate = 3alpha-sulfotaurodeoxycholate + adenosine 3',5'-bisphosphate + H(+). In terms of biological role, sulfotransferase that utilizes 3'-phospho-5'-adenylyl sulfate (PAPS) as sulfonate donor to catalyze the sulfonation of the hydroxyl group of hydroxysteroids and bile acids. Prefered substrates are dehydroepiandrosterone (DHEA, also known as 3beta-hydroxyandrost-5-en-17-one) and 3beta-hydroxy-5-cholenoate, but can also catalyze deoxycholate and its conjugates, and lithocholate conjugates, in vitro. This Rattus norvegicus (Rat) protein is Sulfotransferase 2A6.